The sequence spans 453 residues: Presenilin-like protein At1g08700 (453 aa).

The Cytoplasmic segment spans residues 1-8; sequence MESSILDS. A helical transmembrane segment spans residues 9–29; it reads LGVEIIGVMAPVSICMFLVVL. The Lumenal portion of the chain corresponds to 30 to 68; sequence LTYSLSVTSDPQIRSAANLIYIENPSDSTTVKLEGSLAN. Residues 69–89 traverse the membrane as a helical segment; sequence AIVFVVLIAAVTFILVLLFYY. The Cytoplasmic segment spans residues 90–103; the sequence is NFTNFLKHYMRFSA. A helical transmembrane segment spans residues 104 to 124; it reads FFVLGTMGGAIFLSIIQHFSI. The Lumenal portion of the chain corresponds to 125-132; sequence PVDSITCF. Residues 133-153 form a helical membrane-spanning segment; that stretch reads ILLFNFTILGTLSVFAGGIPI. Topologically, residues 154–159 are cytoplasmic; sequence VLRQCY. The next 2 helical transmembrane spans lie at 160-180 and 181-201; these read MVVMGIVVAAWFTKLPEWTTW and FILVALALYDLVAVLAPGGPL. D190 is an active-site residue. Topologically, residues 202-369 are cytoplasmic; sequence KLLVELASSR…VVDISNRGIK (168 aa). Disordered regions lie at residues 226-248 and 292-329; these read VSSGNQRRNRGSSLRALVGGGGV and IGNGSRGGLERSPLVGSPSASEHSTSVGTRGNMEDRES. A compositionally biased stretch (low complexity) spans 227 to 240; it reads SSGNQRRNRGSSLR. S296 is subject to Phosphoserine. Polar residues predominate over residues 309–320; that stretch reads PSASEHSTSVGT. Residues 370-390 traverse the membrane as a helical segment; it reads LGLGDFIFYSVLVGRAAMYDL. Residue D374 is part of the active site. At 391 to 392 the chain is on the lumenal side; it reads MT. The chain crosses the membrane as a helical span at residues 393 to 413; it reads VYACYLAIISGLGCTLILLSV. Over 414–417 the chain is Cytoplasmic; that stretch reads YNRA. An intramembrane region (helical) is located at residues 418–438; sequence LPALPISIMLGVVFYFLTRLL. The PAL signature appears at 419–421; the sequence is PAL. Residues 439–453 are Cytoplasmic-facing; sequence MEPFVVGVTTNLMMF.

Belongs to the peptidase A22A family. In terms of assembly, homodimer. Probable component of the gamma-secretase complex, a complex composed of a presenilin homodimer, nicastrin, APH1 and PEN2.

It localises to the endoplasmic reticulum membrane. The protein resides in the golgi apparatus membrane. Its function is as follows. Probable subunit of the gamma-secretase complex, an endoprotease complex that catalyzes the intramembrane cleavage of integral membrane proteins such as Notch receptors. This Arabidopsis thaliana (Mouse-ear cress) protein is Presenilin-like protein At1g08700.